The chain runs to 256 residues: Imidazole glycerol phosphate synthase subunit HisF (256 aa).

Active-site residues include aspartate 12 and aspartate 131.

Belongs to the HisA/HisF family. In terms of assembly, heterodimer of HisH and HisF.

The protein localises to the cytoplasm. It catalyses the reaction 5-[(5-phospho-1-deoxy-D-ribulos-1-ylimino)methylamino]-1-(5-phospho-beta-D-ribosyl)imidazole-4-carboxamide + L-glutamine = D-erythro-1-(imidazol-4-yl)glycerol 3-phosphate + 5-amino-1-(5-phospho-beta-D-ribosyl)imidazole-4-carboxamide + L-glutamate + H(+). Its pathway is amino-acid biosynthesis; L-histidine biosynthesis; L-histidine from 5-phospho-alpha-D-ribose 1-diphosphate: step 5/9. In terms of biological role, IGPS catalyzes the conversion of PRFAR and glutamine to IGP, AICAR and glutamate. The HisF subunit catalyzes the cyclization activity that produces IGP and AICAR from PRFAR using the ammonia provided by the HisH subunit. The polypeptide is Imidazole glycerol phosphate synthase subunit HisF (Pseudomonas putida (strain ATCC 700007 / DSM 6899 / JCM 31910 / BCRC 17059 / LMG 24140 / F1)).